The chain runs to 280 residues: Alpha-aminoadipate--LysW ligase LysX (280 aa).

Residues K89, K129, 133-139 (GSWGRLL), 169-180 (QEYVEKPGRDIR), R194, and N202 each bind ATP. Residues 93 to 276 (SVALAKAGLP…IPGEILKYAW (184 aa)) enclose the ATP-grasp domain. 3 residues coordinate Mg(2+): D237, E249, and N251. The N-[TS] motif that is essential for LysX substrate specificity motif lies at 258–259 (NS).

The protein belongs to the RimK family. LysX subfamily. In terms of assembly, homodimer. Mg(2+) is required as a cofactor.

The catalysed reaction is [amino-group carrier protein]-C-terminal-L-glutamate + L-2-aminoadipate + ATP = [amino-group carrier protein]-C-terminal-N-(1,4-dicarboxybutan-1-yl)-L-glutamine + ADP + phosphate + H(+). Its pathway is amino-acid biosynthesis; L-lysine biosynthesis via AAA pathway; L-lysine from L-alpha-aminoadipate (Thermus route): step 1/5. Functionally, catalyzes the ATP-dependent formation of a covalent bond between the amino group of alpha-aminoadipate (AAA) and the gamma-carboxyl group of the C-terminal glutamate residue in LysW. The sequence is that of Alpha-aminoadipate--LysW ligase LysX (lysX) from Thermus thermophilus (strain ATCC 27634 / DSM 579 / HB8).